We begin with the raw amino-acid sequence, 116 residues long: Early 4 ORF3 protein (116 aa).

Belongs to the adenoviridae E4 ORF3 family. As to quaternary structure, homodimer. Multimerizes through C-terminus tail by reciprocal or nonreciprocal interactions. Interacts with host PML isoform 2 C-terminal disordered region. Interacts with E1B-55k; this interaction is necessary for E1B 55 kDa protein to localize to the nuclear matrix fraction of the cell. May interact with host TRIM24, CREBBP, EP300, PRKDC and the MRN complex MRE11/RAD50/NBS1; these interactions may happen through nuclear bodies complexes.

The protein localises to the host nucleus. In terms of biological role, forms a multivalent network in host nucleus that inhibits nuclear bodies and prevents antiviral cellular activities. The network is made of multimerized dimers and surrounds adenovirus replication centers and nucleolus. Plays a role in splicing of the major late transcript. Prevents viral genome concatemer formation. This chain is Early 4 ORF3 protein, found in Human adenovirus C serotype 2 (HAdV-2).